The primary structure comprises 199 residues: N-(5'-phosphoribosyl)anthranilate isomerase (199 aa).

The protein belongs to the TrpF family.

It carries out the reaction N-(5-phospho-beta-D-ribosyl)anthranilate = 1-(2-carboxyphenylamino)-1-deoxy-D-ribulose 5-phosphate. The protein operates within amino-acid biosynthesis; L-tryptophan biosynthesis; L-tryptophan from chorismate: step 3/5. The protein is N-(5'-phosphoribosyl)anthranilate isomerase of Campylobacter jejuni subsp. jejuni serotype O:6 (strain 81116 / NCTC 11828).